The following is a 226-amino-acid chain: Eukaryotic translation initiation factor 3 subunit K (226 aa).

Residues Y44–H202 form the PCI domain.

The protein belongs to the eIF-3 subunit K family. In terms of assembly, component of the eukaryotic translation initiation factor 3 (eIF-3) complex.

It localises to the cytoplasm. Functionally, component of the eukaryotic translation initiation factor 3 (eIF-3) complex, which is involved in protein synthesis of a specialized repertoire of mRNAs and, together with other initiation factors, stimulates binding of mRNA and methionyl-tRNAi to the 40S ribosome. The eIF-3 complex specifically targets and initiates translation of a subset of mRNAs involved in cell proliferation. This chain is Eukaryotic translation initiation factor 3 subunit K (TIF3K1), found in Arabidopsis thaliana (Mouse-ear cress).